The primary structure comprises 501 residues: Geissoschizine oxidase (501 aa).

A helical membrane pass occupies residues 1–21 (MEFSFSSPALYIVYFLLFFVV). Asn60 carries N-linked (GlcNAc...) asparagine glycosylation. Cys442 contacts heme.

Belongs to the cytochrome P450 family. The cofactor is heme. Expressed in leaf epidermis. Also present in the leaf internal phloem-associated parenchyma (IPAP) inside the mesophyll.

The protein localises to the membrane. The catalysed reaction is (19E)-geissoschizine + reduced [NADPH--hemoprotein reductase] + O2 = akuammicine + formate + oxidized [NADPH--hemoprotein reductase] + H2O + H(+). The enzyme catalyses (19E)-geissoschizine + reduced [NADPH--hemoprotein reductase] + O2 = 3,17-didehydrostemmadenine + oxidized [NADPH--hemoprotein reductase] + 2 H2O. The protein operates within alkaloid biosynthesis. In terms of biological role, component of the seco-iridoid and derivatives monoterpenoid indole alkaloids (MIAs, e.g. vincristine, quinine, and strychnine) biosynthesis pathway. Catalyzes the oxidation of 19E-geissoschizine to produce a short-lived MIA unstable intermediate which can be spontaneously converted into akuammicine or oxidized by Redox1 and Redox2 to produce stemmadenine and 16S/R-deshydroxymethylstemmadenine (16S/R-DHS). This is Geissoschizine oxidase from Catharanthus roseus (Madagascar periwinkle).